The chain runs to 100 residues: MARKSLIQREKKRQVLEQKYHSIRQSLEREISEVSSLDDKWEIHRKLQSSPRNSTPTRLHRRCFLTGRSRANYRDFGLSGHVLREMTHACLLPGMKKSSW.

The protein belongs to the universal ribosomal protein uS14 family. As to quaternary structure, part of the 30S ribosomal subunit.

The protein resides in the plastid. It localises to the chloroplast. Its function is as follows. Binds 16S rRNA, required for the assembly of 30S particles. In Cycas taitungensis (Prince sago), this protein is Small ribosomal subunit protein uS14c.